The sequence spans 194 residues: CASP-like protein 4D1 (194 aa).

Residues 1–10 (MASRTVLLPS) are Cytoplasmic-facing. A helical membrane pass occupies residues 11–31 (AVLILRLLSLGLLAASLALIA). Residues 32–55 (ADKLNVDSDPPQRYTFRDVYAYRY) lie on the Extracellular side of the membrane. A helical transmembrane segment spans residues 56-76 (VLAVAVIGCAYTLLQLPLAAV). At 77 to 94 (SIIASGNNKRGIGAGGGS) the chain is on the cytoplasmic side. A helical transmembrane segment spans residues 95–115 (VAVALLVLVLLADVVFALLLA). At 116-161 (TGAAAGFAFTYDVKRYLDGQFDDDSIGTPEVDKLHRDMDKFFDLAY) the chain is on the extracellular side. A helical transmembrane segment spans residues 162 to 182 (AAAGLMLAAAACMALVIMLSV). Over 183-194 (YSLARQVRSDYI) the chain is Cytoplasmic.

This sequence belongs to the Casparian strip membrane proteins (CASP) family. Homodimer and heterodimers.

It is found in the cell membrane. This chain is CASP-like protein 4D1, found in Sorghum bicolor (Sorghum).